The primary structure comprises 256 residues: UPF0259 membrane protein YPO2199/y2042/YP_1997 (256 aa).

6 helical membrane-spanning segments follow: residues 20–40 (IAAI…LNQT), 90–110 (FSAL…IAMV), 118–138 (ALQA…LMFI), 141–161 (LVIQ…AIAL), 192–212 (LIVP…FLIS), and 221–241 (IATI…LVYL).

Belongs to the UPF0259 family.

It is found in the cell inner membrane. This chain is UPF0259 membrane protein YPO2199/y2042/YP_1997, found in Yersinia pestis.